Here is a 335-residue protein sequence, read N- to C-terminus: Peflin (335 aa).

The span at 23–37 (AMEETRREFEKEKQR) shows a compositional bias: basic and acidic residues. Residues 23–92 (AMEETRREFE…SPRHTKTPVD (70 aa)) form a disordered region. Residues 43 to 53 (VTQAQTPNTRV) are compositionally biased toward polar residues. EF-hand domains lie at 144 to 192 (KVAP…DDNS), 198 to 223 (SVDA…IALY), 224 to 259 (KRVK…LGYL), 260 to 300 (IPFE…LMRL), and 301 to 332 (TKLF…LGRF). Ca(2+) is bound by residues Asp-170, Arg-176, and Glu-181. Positions 237, 239, 241, 243, and 248 each coordinate Ca(2+).

As to quaternary structure, homodimer.

Its subcellular location is the cytoplasm. The protein resides in the nucleus. The protein localises to the bud tip. It is found in the bud neck. Its function is as follows. Calcium-binding protein that is required for polar bud growth and cell wall abscission. Can also bind zinc ions. The sequence is that of Peflin (PEF1) from Saccharomyces cerevisiae (strain ATCC 204508 / S288c) (Baker's yeast).